Here is a 297-residue protein sequence, read N- to C-terminus: Dehydrodolichyl diphosphate synthase complex subunit Nus1 (297 aa).

Helical transmembrane passes span 7–26 (LVWRVLHALLCLHLTLTSWL) and 40–56 (CCRAASAAVLAPLGFTL). The segment covering 63–73 (GRNRRHHRHPH) has biased composition (basic residues). The interval 63 to 86 (GRNRRHHRHPHGGPGPGPGPAATH) is disordered. The chain crosses the membrane as a helical span at residues 121–139 (IASLVVWCMAVGISYISVY). N-linked (GlcNAc...) asparagine glycosylation is found at Asn148 and Asn275. The short motif at 294–296 (RLG) is the RXG motif; crucial for prenyltransferase activity element. Positions 295 and 296 each coordinate isopentenyl diphosphate.

It belongs to the UPP synthase family. As to quaternary structure, the active dehydrodolichyl diphosphate synthase complex is a heterotetramer composed of a dimer of heterodimer of DHDDS and NUS1. Interacts with NPC2. It depends on Mg(2+) as a cofactor. In terms of tissue distribution, highly expressed in heart, liver, kidney and pancreas.

The protein localises to the endoplasmic reticulum membrane. It carries out the reaction n isopentenyl diphosphate + (2E,6E)-farnesyl diphosphate = a di-trans,poly-cis-polyprenyl diphosphate + n diphosphate. It functions in the pathway protein modification; protein glycosylation. The protein operates within lipid metabolism. Its function is as follows. With DHDDS, forms the dehydrodolichyl diphosphate synthase (DDS) complex, an essential component of the dolichol monophosphate (Dol-P) biosynthetic machinery. Both subunits contribute to enzymatic activity, i.e. condensation of multiple copies of isopentenyl pyrophosphate (IPP) to farnesyl pyrophosphate (FPP) to produce dehydrodolichyl diphosphate (Dedol-PP), a precursor of dolichol phosphate which is utilized as a sugar carrier in protein glycosylation in the endoplasmic reticulum (ER). Synthesizes long-chain polyprenols, mostly of C95 and C100 chain length. Regulates the glycosylation and stability of nascent NPC2, thereby promoting trafficking of LDL-derived cholesterol. Acts as a specific receptor for the N-terminus of Nogo-B, a neural and cardiovascular regulator. This Mus musculus (Mouse) protein is Dehydrodolichyl diphosphate synthase complex subunit Nus1.